The primary structure comprises 484 residues: Glycogen synthase (484 aa).

Lys20 is a binding site for ADP-alpha-D-glucose.

The protein belongs to the glycosyltransferase 1 family. Bacterial/plant glycogen synthase subfamily.

It carries out the reaction [(1-&gt;4)-alpha-D-glucosyl](n) + ADP-alpha-D-glucose = [(1-&gt;4)-alpha-D-glucosyl](n+1) + ADP + H(+). It functions in the pathway glycan biosynthesis; glycogen biosynthesis. Its function is as follows. Synthesizes alpha-1,4-glucan chains using ADP-glucose. The sequence is that of Glycogen synthase from Vibrio atlanticus (strain LGP32) (Vibrio splendidus (strain Mel32)).